A 382-amino-acid chain; its full sequence is Galactokinase (382 aa).

34–37 (EHTD) serves as a coordination point for substrate. 124 to 130 (GAGLSSS) provides a ligand contact to ATP. Residues Ser130 and Glu162 each coordinate Mg(2+). The active-site Proton acceptor is Asp174. Tyr223 serves as a coordination point for substrate.

This sequence belongs to the GHMP kinase family. GalK subfamily.

Its subcellular location is the cytoplasm. The catalysed reaction is alpha-D-galactose + ATP = alpha-D-galactose 1-phosphate + ADP + H(+). Its pathway is carbohydrate metabolism; galactose metabolism. Functionally, catalyzes the transfer of the gamma-phosphate of ATP to D-galactose to form alpha-D-galactose-1-phosphate (Gal-1-P). This is Galactokinase from Enterobacter sp. (strain 638).